The following is a 309-amino-acid chain: 4-hydroxy-3-methylbut-2-enyl diphosphate reductase (309 aa).

Cys-13 contacts [4Fe-4S] cluster. His-42 and His-75 together coordinate (2E)-4-hydroxy-3-methylbut-2-enyl diphosphate. Dimethylallyl diphosphate contacts are provided by His-42 and His-75. His-42 and His-75 together coordinate isopentenyl diphosphate. [4Fe-4S] cluster is bound at residue Cys-97. Residue His-125 participates in (2E)-4-hydroxy-3-methylbut-2-enyl diphosphate binding. Dimethylallyl diphosphate is bound at residue His-125. His-125 contributes to the isopentenyl diphosphate binding site. The active-site Proton donor is the Glu-127. Residue Thr-165 participates in (2E)-4-hydroxy-3-methylbut-2-enyl diphosphate binding. [4Fe-4S] cluster is bound at residue Cys-195. (2E)-4-hydroxy-3-methylbut-2-enyl diphosphate is bound by residues Ser-223, Ser-224, Asn-225, and Ser-267. Dimethylallyl diphosphate contacts are provided by Ser-223, Ser-224, Asn-225, and Ser-267. Positions 223, 224, 225, and 267 each coordinate isopentenyl diphosphate.

It belongs to the IspH family. The cofactor is [4Fe-4S] cluster.

It catalyses the reaction isopentenyl diphosphate + 2 oxidized [2Fe-2S]-[ferredoxin] + H2O = (2E)-4-hydroxy-3-methylbut-2-enyl diphosphate + 2 reduced [2Fe-2S]-[ferredoxin] + 2 H(+). It carries out the reaction dimethylallyl diphosphate + 2 oxidized [2Fe-2S]-[ferredoxin] + H2O = (2E)-4-hydroxy-3-methylbut-2-enyl diphosphate + 2 reduced [2Fe-2S]-[ferredoxin] + 2 H(+). Its pathway is isoprenoid biosynthesis; dimethylallyl diphosphate biosynthesis; dimethylallyl diphosphate from (2E)-4-hydroxy-3-methylbutenyl diphosphate: step 1/1. It participates in isoprenoid biosynthesis; isopentenyl diphosphate biosynthesis via DXP pathway; isopentenyl diphosphate from 1-deoxy-D-xylulose 5-phosphate: step 6/6. Functionally, catalyzes the conversion of 1-hydroxy-2-methyl-2-(E)-butenyl 4-diphosphate (HMBPP) into a mixture of isopentenyl diphosphate (IPP) and dimethylallyl diphosphate (DMAPP). Acts in the terminal step of the DOXP/MEP pathway for isoprenoid precursor biosynthesis. This Chlamydia abortus (strain DSM 27085 / S26/3) (Chlamydophila abortus) protein is 4-hydroxy-3-methylbut-2-enyl diphosphate reductase.